The chain runs to 568 residues: Zinc finger protein 768 (568 aa).

A compositionally biased stretch (basic and acidic residues) spans 1-16 (MEREASSWGLESRDVH). 3 disordered regions span residues 1–223 (MERE…SLGV), 228–247 (SFTQ…FDMP), and 264–287 (LNLT…QGPR). Phosphoserine occurs at positions 17, 23, and 27. T35 bears the Phosphothreonine mark. Residues S36, S65, S72, S79, S86, S93, S100, S107, S114, S121, S128, S135, and S149 each carry the phosphoserine modification. Residues 62–80 (EPQSPEFEPQSPEFESQSP) are compositionally biased toward low complexity. The span at 110–122 (SDPQSPEFESQSP) shows a compositional bias: polar residues. Phosphotyrosine is present on Y152. S154 carries the post-translational modification Phosphoserine. A compositionally biased stretch (polar residues) spans 159–186 (FESQSPGYESQSPGYEPQNSGDGVQNSE). T189 carries the post-translational modification Phosphothreonine. S191 is subject to Phosphoserine. The C2H2-type 1 zinc-finger motif lies at 289–311 (NICGICGKSFGRGSTLIQHQRIH). Residue T312 is modified to Phosphothreonine. Residue Y317 is modified to Phosphotyrosine. C2H2-type zinc fingers lie at residues 317 to 339 (YKCE…QRTH), 345 to 367 (YKCP…QRTH), 373 to 395 (YKCP…QRTH), and 401 to 423 (YSCP…QRVH). A phosphoserine mark is found at S323 and S327. Residue T424 is modified to Phosphothreonine. 5 consecutive C2H2-type zinc fingers follow at residues 429–451 (FSCG…ARSH), 457–479 (FKCP…ARTH), 485–507 (YSCP…QRSH), 513–535 (YRCA…HRVH), and 541–563 (YKCD…QRTH). S470 is modified (phosphoserine).

It belongs to the krueppel C2H2-type zinc-finger protein family. As to quaternary structure, interacts (via zinc-finger domains) with TP53 (via N-terminus); interaction might be facilitated by TP53 oligomerization state. Interacts with ELP3. May be phosphorylated at residue 'Ser-5' of the tandem heptapeptide repeats in the N-terminus. Phosphorylation might be increased upon RAS pathway activation and negatively regulate protein stability.

Its subcellular location is the nucleus. It is found in the chromosome. Its function is as follows. Binds to mammalian-wide interspersed repeat (MIRs) sequences in euchromatin and promoter regions of genes at the consensus sequence 5'-GCTGTGTG-[N20]-CCTCTCTG-3', consisting of two anchor regions connected by a linker region; the linker region probably does not contribute to the binding specificity. Required for cell homeostasis. May be involved in transcriptional regulation. This Mus musculus (Mouse) protein is Zinc finger protein 768 (Znf768).